We begin with the raw amino-acid sequence, 108 residues long: UPF0060 membrane protein SAR2425 (108 aa).

4 helical membrane-spanning segments follow: residues 5 to 25 (IFIFILAGLCEIGGGYLIWLW), 31 to 51 (SSLVGLIGGVILMLYGVIATF), 60 to 80 (VYAAYGGVFIIMSLIFAMVVD), and 86 to 106 (KYDVIGAIICIVGVLVMLLPS).

The protein belongs to the UPF0060 family.

It is found in the cell membrane. The sequence is that of UPF0060 membrane protein SAR2425 from Staphylococcus aureus (strain MRSA252).